A 511-amino-acid chain; its full sequence is GMP synthase [glutamine-hydrolyzing] (511 aa).

One can recognise a Glutamine amidotransferase type-1 domain in the interval M5–D195. The Nucleophile role is filled by C82. Residues H169 and E171 contribute to the active site. The 191-residue stretch at W196–R386 folds into the GMPS ATP-PPase domain. S223–S229 serves as a coordination point for ATP.

In terms of assembly, homodimer.

It catalyses the reaction XMP + L-glutamine + ATP + H2O = GMP + L-glutamate + AMP + diphosphate + 2 H(+). Its pathway is purine metabolism; GMP biosynthesis; GMP from XMP (L-Gln route): step 1/1. Functionally, catalyzes the synthesis of GMP from XMP. The protein is GMP synthase [glutamine-hydrolyzing] of Ruminiclostridium cellulolyticum (strain ATCC 35319 / DSM 5812 / JCM 6584 / H10) (Clostridium cellulolyticum).